The primary structure comprises 653 residues: Forkhead box protein O1 (653 aa).

2 disordered regions span residues 1-64 and 117-156; these read MAEA…ASAA and LHPAPPQPPPPGPLSQHPPVPPAAGPLAGQPRKSSSSRRN. Residue threonine 24 is modified to Phosphothreonine; by PKB/AKT1 or PKB/AKT2 and SGK1. Positions 35-64 are enriched in low complexity; it reads SNSATSSPAPSGGATANPDASAGLPPASAA. Residues 119–140 show a composition bias toward pro residues; sequence PAPPQPPPPGPLSQHPPVPPAA. A DNA-binding region (fork-head) is located at residues 157 to 233; the sequence is AWGNLSYADL…VQNEGTGKSS (77 aa). DNA-binding stretches follow at residues 209–216 and 232–235; these read NSIRHNLS and SSWW. Residue serine 210 is modified to Phosphoserine; by STK4/MST1. Phosphoserine is present on residues serine 216, serine 232, and serine 233. Positions 232-335 are disordered; it reads SSWWMLNPEG…FSPIMTEQDD (104 aa). N6-acetyllysine occurs at positions 243 and 246. Serine 247 carries the phosphoserine; by CDK1 modification. Omega-N-methylarginine; by PRMT1 is present on residues arginine 249 and arginine 251. A Nuclear localization signal motif is present at residues 249-251; the sequence is RRR. Serine 254 carries the phosphoserine; by PKB/AKT1 and SGK1 modification. N6-acetyllysine is present on residues lysine 260, lysine 263, and lysine 272. The tract at residues 281 to 561 is sufficient for interaction with NLK; sequence GAGDSPGSQF…RLTPVKTPLQ (281 aa). 2 positions are modified to phosphoserine: serine 285 and serine 296. A compositionally biased stretch (polar residues) spans 307-324; it reads NWSTFRPRTSSNASTISG. The residue at position 317 (serine 317) is a Phosphoserine; by PKB/AKT1 or PKB/AKT2. Position 320 is a phosphoserine; by CK1 and SGK1 (serine 320). Serine 323 carries the phosphoserine modification. Serine 327 is subject to Phosphoserine; by DYRK1A. A Phosphothreonine modification is found at threonine 331. The segment at 361–457 is required for interaction with RUNX2; it reads SEISNPENME…GGLNQFNCAQ (97 aa). At lysine 421 the chain carries N6-acetyllysine. The Required for interaction with SIRT1 motif lies at 460–464; sequence LKELL.

Interacts with LRPPRC. Interacts with RUNX2; the interaction inhibits RUNX2 transcriptional activity and mediates the IGF1/insulin-dependent BGLAP expression in osteoblasts Interacts with PPP2R1A; the interaction regulates the dephosphorylation of FOXO1 at Thr-24 and Ser-254 leading to its nuclear import. Interacts with NLK. Interacts with SIRT1; the interaction results in the deacetylation of FOXO1 leading to activation of FOXO1-mediated transcription of genes involved in DNA repair and stress resistance. Binds to CDK1. Interacts with the 14-3-3 proteins, YWHAG and YWHAZ; the interactions require insulin-stimulated phosphorylation on Thr-24, promote nuclear exit and loss of transcriptional activity. Interacts with SKP2; the interaction ubiquitinates FOXO1 leading to its proteasomal degradation. The interaction requires the presence of KRIT1. Interacts (via the C-terminal half) with ATF4 (via its DNA-binding domain); the interaction occurs in osteoblasts, regulates glucose homeostasis via suppression of beta-cell proliferation and subsequent decrease in insulin production. Interacts with PRMT1; the interaction methylates FOXO1, prevents PKB/AKT1 phosphorylation and retains FOXO1 in the nucleus. Interacts with EP300 and CREBBP; the interactions acetylate FOXO1. Interacts with SIRT2; the interaction is disrupted in response to oxidative stress or serum deprivation, leading to increased level of acetylated FOXO1, which promotes stress-induced autophagy by stimulating E1-like activating enzyme ATG7. Interacts (acetylated form) with ATG7; the interaction is increased in response to oxidative stress or serum deprivation and promotes the autophagic process leading to cell death. Interacts (acetylated form) with PPARG. Interacts with XBP1; this interaction is direct and leads to FOXO1 ubiquitination and degradation via the proteasome pathway. Interacts with WDFY2. Forms a complex with WDFY2 and AKT1. Interacts with CRY1. Interacts with PPIA/CYPA; the interaction promotes FOXO1 dephosphorylation, nuclear accumulation and transcriptional activity. Interacts with TOX4; FOXO1 is required for full induction of TOX4-dependent activity and the interaction is inhibited by insulin. Interacts (when phosphorylated on Ser-254) with STUB1/CHIP. In terms of processing, phosphorylation by NLK promotes nuclear export and inhibits the transcriptional activity. In response to growth factors, phosphorylation on Thr-24, Ser-254 and Ser-320 by PKB/AKT1 promotes nuclear export and inactivation of transactivational activity. Phosphorylation on Thr-24 is required for binding 14-3-3 proteins. Phosphorylation of Ser-254 decreases DNA-binding activity and promotes the phosphorylation of Thr-24 and Ser-317, permitting phosphorylation of Ser-320 and Ser-323, probably by CDK1, leading to nuclear exclusion and loss of function. Stress signals, such as response to oxygen or nitric oxide, attenuate the PKB/AKT1-mediated phosphorylation leading to nuclear retention. Phosphorylation of Ser-327 is independent of IGF1 and leads to reduced function. Dephosphorylated on Thr-24 and Ser-254 by PP2A in beta-cells under oxidative stress leading to nuclear retention. Phosphorylation of Ser-247 by CDK1 disrupts binding of 14-3-3 proteins leading to nuclear accumulation and has no effect on DNA binding nor transcriptional activity. Phosphorylation by STK4/MST1 on Ser-210, upon oxidative stress, inhibits binding to 14-3-3 proteins and nuclear export. PPIA/CYPA promotes its dephosphorylation on Ser-254. Post-translationally, ubiquitinated by SKP2. Ubiquitination leads to proteasomal degradation. Ubiquitinated by STUB1/CHIP; when Ser-254 is phosphorylated. Methylation inhibits AKT1-mediated phosphorylation at Ser-254 and is increased by oxidative stress. In terms of processing, acetylated. Acetylation at Lys-260 and Lys-272 are necessary for autophagic cell death induction. Deacetylated by SIRT2 in response to oxidative stress or serum deprivation, thereby negatively regulating FOXO1-mediated autophagic cell death. Once in the nucleus, acetylated by CREBBP/EP300. Acetylation diminishes the interaction with target DNA and attenuates the transcriptional activity. It increases the phosphorylation at Ser-254. Deacetylation by SIRT1 results in reactivation of the transcriptional activity. Oxidative stress by hydrogen peroxide treatment appears to promote deacetylation and uncoupling of insulin-induced phosphorylation. By contrast, resveratrol acts independently of acetylation. Acetylated at Lys-421, promoting its localization to the nucleus and transcription factor activity. Deacetylation at Lys-421 by SIRT6, promotes its translocation into the cytoplasm, preventing its transcription factor activity. Deacetylation and subsequent inhibition by SIRT6 has different effects depending on cell types: it inhibits gluconeogenesis in hepatocytes, promotes glucose sensing in pancreatic beta-cells and regulates lipid catabolism in brown adipocytes.

It is found in the cytoplasm. It localises to the nucleus. Functionally, transcription factor that is the main target of insulin signaling and regulates metabolic homeostasis in response to oxidative stress. Binds to the insulin response element (IRE) with consensus sequence 5'-TT[G/A]TTTTG-3' and the related Daf-16 family binding element (DBE) with consensus sequence 5'-TT[G/A]TTTAC-3'. Activity suppressed by insulin. Main regulator of redox balance and osteoblast numbers and controls bone mass. Orchestrates the endocrine function of the skeleton in regulating glucose metabolism. Also acts as a key regulator of chondrogenic commitment of skeletal progenitor cells in response to lipid availability: when lipids levels are low, translocates to the nucleus and promotes expression of SOX9, which induces chondrogenic commitment and suppresses fatty acid oxidation. Acts synergistically with ATF4 to suppress osteocalcin/BGLAP activity, increasing glucose levels and triggering glucose intolerance and insulin insensitivity. Also suppresses the transcriptional activity of RUNX2, an upstream activator of osteocalcin/BGLAP. Acts as an inhibitor of glucose sensing in pancreatic beta cells by acting as a transcription repressor and suppressing expression of PDX1. In hepatocytes, promotes gluconeogenesis by acting together with PPARGC1A and CEBPA to activate the expression of genes such as IGFBP1, G6PC1 and PCK1. Also promotes gluconeogenesis by directly promoting expression of PPARGC1A and G6PC1. Important regulator of cell death acting downstream of CDK1, PKB/AKT1 and STK4/MST1. Promotes neural cell death. Mediates insulin action on adipose tissue. Regulates the expression of adipogenic genes such as PPARG during preadipocyte differentiation and, adipocyte size and adipose tissue-specific gene expression in response to excessive calorie intake. Regulates the transcriptional activity of GADD45A and repair of nitric oxide-damaged DNA in beta-cells. Required for the autophagic cell death induction in response to starvation or oxidative stress in a transcription-independent manner. Mediates the function of MLIP in cardiomyocytes hypertrophy and cardiac remodeling. Positive regulator of apoptosis in cardiac smooth muscle cells as a result of its transcriptional activation of pro-apoptotic genes. Regulates endothelial cell (EC) viability and apoptosis in a PPIA/CYPA-dependent manner via transcription of CCL2 and BCL2L11 which are involved in EC chemotaxis and apoptosis. This chain is Forkhead box protein O1 (FOXO1), found in Ictidomys tridecemlineatus (Thirteen-lined ground squirrel).